Consider the following 289-residue polypeptide: Rhodopsin (289 aa).

Topologically, residues 1-7 are extracellular; that stretch reads YLVNPAG. A helical membrane pass occupies residues 8 to 32; that stretch reads YAALGAYMFLLILIGSPVNFLTLYV. At 33–44 the chain is on the cytoplasmic side; the sequence is TLEHKKLRTPLN. A helical transmembrane segment spans residues 45–67; it reads YILLNLAVADLFMVLGGFTTTMY. At 68 to 81 the chain is on the extracellular side; the sequence is TSMHGYSVLGRLGC. Cys-81 and Cys-158 are disulfide-bonded. Residues 82-104 traverse the membrane as a helical segment; sequence ILEGFFATLGGEIALWSLVVLAI. Residues 105–107 carry the 'Ionic lock' involved in activated form stabilization motif; it reads ERW. At 105 to 123 the chain is on the cytoplasmic side; it reads ERWIVVCKPISNFRFTEDH. A helical transmembrane segment spans residues 124 to 144; it reads AIMGLAFSWVMALACAVPPLV. The Extracellular portion of the chain corresponds to 145-173; the sequence is GWSRYIPEGMQCSCGVDYYTRAEGFNNES. Asn-171 is a glycosylation site (N-linked (GlcNAc...) asparagine). The chain crosses the membrane as a helical span at residues 174–195; the sequence is FVIYMFIVHFLIPLSVIFFCYG. Over 196 to 223 the chain is Cytoplasmic; it reads RLLCAVKEAAAAQQESETTQRPEKEVTR. Residues 224–245 traverse the membrane as a helical segment; the sequence is MVVIMVIAFLVCCLPNASVAWW. Over 246–257 the chain is Extracellular; that stretch reads IFCNQGSDFGPI. Residues 258–279 form a helical membrane-spanning segment; it reads FMTLPSFFAKSAAIYNPMIYIC. The residue at position 267 (Lys-267) is an N6-(retinylidene)lysine. Residues 280 to 289 lie on the Cytoplasmic side of the membrane; it reads MNKQFRHCMI.

The protein belongs to the G-protein coupled receptor 1 family. Opsin subfamily. In terms of processing, phosphorylated on some or all of the serine and threonine residues present in the C-terminal region. Contains one covalently linked retinal chromophore.

It localises to the membrane. The protein resides in the cell projection. Its subcellular location is the cilium. It is found in the photoreceptor outer segment. Photoreceptor required for image-forming vision at low light intensity. While most salt water fish species use retinal as chromophore, most freshwater fish use 3-dehydroretinal, or a mixture of retinal and 3-dehydroretinal. Light-induced isomerization of 11-cis to all-trans retinal triggers a conformational change that activates signaling via G-proteins. Subsequent receptor phosphorylation mediates displacement of the bound G-protein alpha subunit by arrestin and terminates signaling. The sequence is that of Rhodopsin (rho) from Limnocottus bergianus.